A 420-amino-acid polypeptide reads, in one-letter code: Acetylornithine aminotransferase (420 aa).

Residues 118 to 119 (GA) and Phe151 contribute to the pyridoxal 5'-phosphate site. Arg154 is a binding site for N(2)-acetyl-L-ornithine. Position 242–245 (242–245 (DEVQ)) interacts with pyridoxal 5'-phosphate. Lys271 carries the N6-(pyridoxal phosphate)lysine modification. Ser298 contributes to the N(2)-acetyl-L-ornithine binding site. Pyridoxal 5'-phosphate is bound at residue Thr299.

It belongs to the class-III pyridoxal-phosphate-dependent aminotransferase family. ArgD subfamily. Homodimer. Pyridoxal 5'-phosphate is required as a cofactor.

Its subcellular location is the cytoplasm. It catalyses the reaction N(2)-acetyl-L-ornithine + 2-oxoglutarate = N-acetyl-L-glutamate 5-semialdehyde + L-glutamate. It participates in amino-acid biosynthesis; L-arginine biosynthesis; N(2)-acetyl-L-ornithine from L-glutamate: step 4/4. The chain is Acetylornithine aminotransferase from Parasynechococcus marenigrum (strain WH8102).